A 155-amino-acid chain; its full sequence is Large ribosomal subunit protein uL30 (155 aa).

The protein belongs to the universal ribosomal protein uL30 family. In terms of assembly, part of the 50S ribosomal subunit.

The sequence is that of Large ribosomal subunit protein uL30 from Nitrosopumilus maritimus (strain SCM1).